We begin with the raw amino-acid sequence, 472 residues long: ATP synthase subunit beta (472 aa).

G157–T164 is an ATP binding site.

Belongs to the ATPase alpha/beta chains family. In terms of assembly, F-type ATPases have 2 components, CF(1) - the catalytic core - and CF(0) - the membrane proton channel. CF(1) has five subunits: alpha(3), beta(3), gamma(1), delta(1), epsilon(1). CF(0) has three main subunits: a(1), b(2) and c(9-12). The alpha and beta chains form an alternating ring which encloses part of the gamma chain. CF(1) is attached to CF(0) by a central stalk formed by the gamma and epsilon chains, while a peripheral stalk is formed by the delta and b chains.

It localises to the cell inner membrane. The enzyme catalyses ATP + H2O + 4 H(+)(in) = ADP + phosphate + 5 H(+)(out). Its function is as follows. Produces ATP from ADP in the presence of a proton gradient across the membrane. The catalytic sites are hosted primarily by the beta subunits. The sequence is that of ATP synthase subunit beta from Desulfatibacillum aliphaticivorans.